A 660-amino-acid polypeptide reads, in one-letter code: V-type ATP synthase subunit I (660 aa).

Transmembrane regions (helical) follow at residues 312–332 (FFAF…GLLF), 362–382 (ILGL…GMSF), 453–473 (FIDN…LSLG), 485–505 (IGWI…LGTV), 520–540 (GQIG…LAMI), 560–580 (VLSY…GATF), and 593–613 (SIVI…GGVI).

The protein belongs to the V-ATPase 116 kDa subunit family.

Its subcellular location is the cell membrane. In terms of biological role, produces ATP from ADP in the presence of a proton gradient across the membrane. The chain is V-type ATP synthase subunit I (atpI) from Chlamydia pneumoniae (Chlamydophila pneumoniae).